The following is a 128-amino-acid chain: Cystatin-12 (128 aa).

The signal sequence occupies residues 1-21; the sequence is MLWKSVLPVALIVLGIHDCSF. Intrachain disulfides connect Cys82-Cys92 and Cys105-Cys125. Asn122 carries N-linked (GlcNAc...) asparagine glycosylation.

It belongs to the cystatin family.

The protein resides in the secreted. Functionally, may play a specialized role in spermatogenesis. In Rattus norvegicus (Rat), this protein is Cystatin-12 (Cst12).